Reading from the N-terminus, the 873-residue chain is Zinc fingers and homeoboxes protein 1 (873 aa).

Positions 1–63 (MASRRKSTTP…ESVDSDNQQN (63 aa)) are disordered. Over residues 18 to 30 (QDPDLELISDLDE) the composition is skewed to acidic residues. Position 36 is a phosphothreonine (threonine 36). A phosphoserine mark is found at serine 45, serine 47, and serine 48. 2 C2H2-type zinc fingers span residues 70–93 (YECKYCTFQTPDLNMFTFHVDSEH) and 102–125 (YVCVECNFLTKRYDALSEHNLKYH). A Glycyl lysine isopeptide (Lys-Gly) (interchain with G-Cter in SUMO2) cross-link involves residue lysine 159. Residue serine 202 is modified to Phosphoserine. A disordered region spans residues 202 to 236 (SVEDVPEEKENEIKPDREEIVENPSSSASESNTST). Basic and acidic residues predominate over residues 212–221 (NEIKPDREEI). Low complexity predominate over residues 223–236 (ENPSSSASESNTST). Residues 272–432 (NSNLIPKVLI…QNNVQKSQVP (161 aa)) are required for dimerization. Positions 272–564 (NSNLIPKVLI…AQPKQSWNPF (293 aa)) are required for interaction with NFYA. Residues 284 to 346 (NSIPTYNAAL…LKHGVSWTPE (63 aa)) constitute a DNA-binding region (homeobox 1). Glycyl lysine isopeptide (Lys-Gly) (interchain with G-Cter in SUMO2) cross-links involve residues lysine 441, lysine 454, lysine 485, and lysine 629. DNA-binding regions (homeobox) lie at residues 464–526 (SFGI…KSNQ) and 569–630 (PQKF…EEKM). Disordered regions lie at residues 626 to 667 (KEEK…ICKK) and 732 to 769 (SSMNGLSSLRKRGRGRPKGRGRGRPRGRPRGSKRINNW). Serine 648 carries the phosphoserine modification. Positions 660–722 (STGKICKKTP…YAWKNGNLKW (63 aa)) form a DNA-binding region, homeobox 4. Residues 734 to 768 (MNGLSSLRKRGRGRPKGRGRGRPRGRPRGSKRINN) are required for nuclear localization. Residues 740–764 (LRKRGRGRPKGRGRGRPRGRPRGSK) show a composition bias toward basic residues. The residue at position 774 (serine 774) is a Phosphoserine. The homeobox 5 DNA-binding region spans 777–832 (KFKTGTAILKDYYLKHKFLNEQDLDELVNKSHMGYEQVREWFAERQRRSELGIELF). The interval 829–873 (IELFEENEEEDEVIDDQEEDEEETDDSDTWEPPRHVKRKLSKSDD) is disordered. Acidic residues predominate over residues 831–857 (LFEENEEEDEVIDDQEEDEEETDDSDT). The segment at 831–873 (LFEENEEEDEVIDDQEEDEEETDDSDTWEPPRHVKRKLSKSDD) is required for repressor activity. Positions 863–873 (HVKRKLSKSDD) are enriched in basic residues.

The protein belongs to the ZHX family. As to quaternary structure, forms homodimers. Also forms heterodimers with ZHX3 which is a prerequisite for repressor activity and with ZHX2. Interacts with NFYA. Interacts with ATF7IP.

It localises to the nucleus. Its function is as follows. Acts as a transcriptional repressor. This chain is Zinc fingers and homeoboxes protein 1 (ZHX1), found in Gorilla gorilla gorilla (Western lowland gorilla).